Consider the following 215-residue polypeptide: Chymomexicain (215 aa).

3 cysteine pairs are disulfide-bonded: cysteine 22-cysteine 63, cysteine 56-cysteine 96, and cysteine 154-cysteine 201. The active site involves cysteine 25. Catalysis depends on residues histidine 160 and asparagine 176.

It belongs to the peptidase C1 family.

Functionally, cysteine protease. In Jacaratia mexicana (Wild papaya), this protein is Chymomexicain.